The following is a 132-amino-acid chain: Large ribosomal subunit protein uL24 (132 aa).

This sequence belongs to the universal ribosomal protein uL24 family. In terms of assembly, part of the 50S ribosomal subunit.

In terms of biological role, one of two assembly initiator proteins, it binds directly to the 5'-end of the 23S rRNA, where it nucleates assembly of the 50S subunit. One of the proteins that surrounds the polypeptide exit tunnel on the outside of the subunit. This chain is Large ribosomal subunit protein uL24, found in Synechococcus sp. (strain JA-2-3B'a(2-13)) (Cyanobacteria bacterium Yellowstone B-Prime).